Reading from the N-terminus, the 245-residue chain is 1-(5-phosphoribosyl)-5-[(5-phosphoribosylamino)methylideneamino] imidazole-4-carboxamide isomerase (245 aa).

D7 (proton acceptor) is an active-site residue. D129 (proton donor) is an active-site residue.

Belongs to the HisA/HisF family.

It localises to the cytoplasm. The enzyme catalyses 1-(5-phospho-beta-D-ribosyl)-5-[(5-phospho-beta-D-ribosylamino)methylideneamino]imidazole-4-carboxamide = 5-[(5-phospho-1-deoxy-D-ribulos-1-ylimino)methylamino]-1-(5-phospho-beta-D-ribosyl)imidazole-4-carboxamide. Its pathway is amino-acid biosynthesis; L-histidine biosynthesis; L-histidine from 5-phospho-alpha-D-ribose 1-diphosphate: step 4/9. The polypeptide is 1-(5-phosphoribosyl)-5-[(5-phosphoribosylamino)methylideneamino] imidazole-4-carboxamide isomerase (Shewanella putrefaciens (strain CN-32 / ATCC BAA-453)).